The primary structure comprises 662 residues: tRNA 5-methylaminomethyl-2-thiouridine biosynthesis bifunctional protein MnmC (662 aa).

The tRNA (mnm(5)s(2)U34)-methyltransferase stretch occupies residues 1–245; sequence MKQNAIQPAN…KREMLTGEMA (245 aa). The FAD-dependent cmnm(5)s(2)U34 oxidoreductase stretch occupies residues 270 to 662; that stretch reads IGGGIASALL…RKLLKGKAVK (393 aa).

This sequence in the N-terminal section; belongs to the methyltransferase superfamily. tRNA (mnm(5)s(2)U34)-methyltransferase family. The protein in the C-terminal section; belongs to the DAO family. It depends on FAD as a cofactor.

The protein resides in the cytoplasm. It catalyses the reaction 5-aminomethyl-2-thiouridine(34) in tRNA + S-adenosyl-L-methionine = 5-methylaminomethyl-2-thiouridine(34) in tRNA + S-adenosyl-L-homocysteine + H(+). In terms of biological role, catalyzes the last two steps in the biosynthesis of 5-methylaminomethyl-2-thiouridine (mnm(5)s(2)U) at the wobble position (U34) in tRNA. Catalyzes the FAD-dependent demodification of cmnm(5)s(2)U34 to nm(5)s(2)U34, followed by the transfer of a methyl group from S-adenosyl-L-methionine to nm(5)s(2)U34, to form mnm(5)s(2)U34. In Klebsiella pneumoniae subsp. pneumoniae (strain ATCC 700721 / MGH 78578), this protein is tRNA 5-methylaminomethyl-2-thiouridine biosynthesis bifunctional protein MnmC.